Here is a 403-residue protein sequence, read N- to C-terminus: Cytoplasmic tRNA 2-thiolation protein 2 (403 aa).

This sequence belongs to the CTU2/NCS2 family.

Its subcellular location is the cytoplasm. The protein operates within tRNA modification; 5-methoxycarbonylmethyl-2-thiouridine-tRNA biosynthesis. Functionally, plays a central role in 2-thiolation of mcm(5)S(2)U at tRNA wobble positions of tRNA(Lys), tRNA(Glu) and tRNA(Gln). May act by forming a heterodimer with NCS6/CTU1 that ligates sulfur from thiocarboxylated URM1 onto the uridine of tRNAs at wobble position. This Drosophila ananassae (Fruit fly) protein is Cytoplasmic tRNA 2-thiolation protein 2.